The following is a 386-amino-acid chain: MGQREMWRLMSRFNAFKRTNTILHHLRMSKHTDAAEEVLLEKKGCTGVITLNRPKFLNALTLNMIRQIYPQLKKWEQDPETFLIIIKGAGGKAFCAGGDIRVISEAEKAKQKIAPVFFREEYMLNNAVGSCQKPYVALIHGITMGGGVGLSVHGQFRVATEKCLFAMPETAIGLFPDVGGGYFLPRLQGKLGYFLALTGFRLKGRDVYRAGIATHFVDSEKLAMLEEDLLALKSPSKENIASVLENYHTESKIDRDKSFILEEHMDKINSCFSANTVEEIIENLQQDGSSFALEQLKVINKMSPTSLKITLRQLMEGSSKTLQEVLTMEYRLSQACMRGHDFHEGVRAVLIDKDQSPKWKPADLKEVTEEDLNNHFKSLGSSDLKF.

The N-terminal 32 residues, Met-1–Thr-32, are a transit peptide targeting the mitochondrion. Residues Lys-55 and Lys-92 each carry the N6-acetyllysine; alternate modification. Lys-55 and Lys-92 each carry N6-succinyllysine; alternate. Substrate is bound by residues Glu-121, Gly-146, Glu-169, and Asp-177. Lys-221 is modified (N6-acetyllysine; alternate). The residue at position 221 (Lys-221) is an N6-succinyllysine; alternate. Ser-234 carries the post-translational modification Phosphoserine. Lys-257 carries the post-translational modification N6-succinyllysine. Position 297 is an N6-acetyllysine; alternate (Lys-297). Lys-297 carries the N6-succinyllysine; alternate modification. The residue at position 301 (Lys-301) is an N6-succinyllysine. N6-acetyllysine; alternate is present on Lys-353. Lys-353 is subject to N6-succinyllysine; alternate. Ser-356 bears the Phosphoserine mark. 2 positions are modified to N6-acetyllysine: Lys-360 and Lys-365. The residue at position 377 (Lys-377) is an N6-succinyllysine.

This sequence belongs to the enoyl-CoA hydratase/isomerase family. In terms of tissue distribution, highly expressed in liver and kidney, also detected in heart, muscle and brain (at protein level). Not detected in lung.

The protein resides in the mitochondrion. The catalysed reaction is 3-hydroxy-2-methylpropanoyl-CoA + H2O = 3-hydroxy-2-methylpropanoate + CoA + H(+). Its pathway is amino-acid degradation; L-valine degradation. Hydrolyzes 3-hydroxyisobutyryl-CoA (HIBYL-CoA), a saline catabolite. Has high activity toward isobutyryl-CoA. Could be an isobutyryl-CoA dehydrogenase that functions in valine catabolism. Also hydrolyzes 3-hydroxypropanoyl-CoA. In Homo sapiens (Human), this protein is 3-hydroxyisobutyryl-CoA hydrolase, mitochondrial (HIBCH).